The sequence spans 91 residues: Bombyxin C-1 (91 aa).

The N-terminal stretch at 1–19 (MKLVMLLVVVSAMLVLGGA) is a signal peptide. Q20 is modified (pyrrolidone carboxylic acid). Cystine bridges form between C27–C76, C39–C89, and C75–C80. A propeptide spans 47 to 67 (SGSQYAGYGWPWLPPFSSSRG) (c peptide like).

It belongs to the insulin family. Heterodimer of a B chain and an A chain linked by two disulfide bonds.

The protein localises to the secreted. Functionally, brain peptide responsible for activation of prothoracic glands to produce ecdysone in insects. The sequence is that of Bombyxin C-1 (BBXC1) from Bombyx mori (Silk moth).